The primary structure comprises 147 residues: Hemoglobin subunit epsilon (147 aa).

One can recognise a Globin domain in the interval 3-147 (HFTAEEKAAI…VAIALGHKYH (145 aa)). A phosphoserine mark is found at S14 and S51. Residues H64 and H93 each coordinate heme b.

This sequence belongs to the globin family. As to quaternary structure, heterotetramer of two alpha chains and two epsilon chains in early embryonic hemoglobin Gower-2; two zeta chains and two epsilon chains in early embryonic hemoglobin Gower-1. In terms of tissue distribution, red blood cells.

The epsilon chain is a beta-type chain of early mammalian embryonic hemoglobin. This chain is Hemoglobin subunit epsilon (HBE1), found in Leontopithecus rosalia (Golden lion tamarin).